A 260-amino-acid chain; its full sequence is NAD kinase (260 aa).

D54 functions as the Proton acceptor in the catalytic mechanism. NAD(+) is bound by residues 54–55 (DG), 123–124 (ND), R150, D152, and 163–168 (TAYSLS).

It belongs to the NAD kinase family. It depends on a divalent metal cation as a cofactor.

It is found in the cytoplasm. The enzyme catalyses NAD(+) + ATP = ADP + NADP(+) + H(+). Its function is as follows. Involved in the regulation of the intracellular balance of NAD and NADP, and is a key enzyme in the biosynthesis of NADP. Catalyzes specifically the phosphorylation on 2'-hydroxyl of the adenosine moiety of NAD to yield NADP. The protein is NAD kinase of Caldicellulosiruptor saccharolyticus (strain ATCC 43494 / DSM 8903 / Tp8T 6331).